The chain runs to 58 residues: Putative transcript Y 13 protein (58 aa).

The helical transmembrane segment at 17–37 (LLGWDLNLSLFLGLCLMLLLA) threads the bilayer.

The protein localises to the membrane. This Homo sapiens (Human) protein is Putative transcript Y 13 protein (TTTY13).